Here is a 432-residue protein sequence, read N- to C-terminus: MGKSVVVLGAQWGDEGKGKIVDLLTDRAKYVVRYQGGHNAGHTLIINGEKTVLRLIPSGILRANVTCLIGNGVVLSPSALMQEMGELESRGINVRERLLISEACPLILPYHVAMDHAREAALGKKAIGTTGRGIGPAYEDKVARRGLRVGDLFDKEQFAEKLKNILDYYNFQLVNYYKVEAVDYQKTLDDVMAVADIITGMVADIGAILNTARKNGDNILFEGAQGAMLDIDHGTYPYVTSSNTTAGGVATGSGLGPRNIDYVLGIIKAYCTRVGGGPFTTELFDEVGQEIARKGNEFGAVTGRPRRCGWFDAVAIRRAIQVNSITGFCMTKLDVLDGFDEVKICVGYKLPNGEVVDYAPLAAKDWEGVEPVYETMPGWKENTFRVTDVDQLPVNCLNYIKRIEEVTGVPVAILSTGPDRVETMILQDPFTA.

GTP-binding positions include 13 to 19 (GDEGKGK) and 41 to 43 (GHT). Aspartate 14 serves as the catalytic Proton acceptor. The Mg(2+) site is built by aspartate 14 and glycine 41. Residues 14 to 17 (DEGK), 39 to 42 (NAGH), threonine 130, arginine 144, glutamine 225, threonine 240, and arginine 304 each bind IMP. The active-site Proton donor is the histidine 42. 300–306 (AVTGRPR) contacts substrate. GTP contacts are provided by residues arginine 306, 332 to 334 (KLD), and 415 to 417 (STG).

The protein belongs to the adenylosuccinate synthetase family. As to quaternary structure, homodimer. Mg(2+) is required as a cofactor.

The protein localises to the cytoplasm. It carries out the reaction IMP + L-aspartate + GTP = N(6)-(1,2-dicarboxyethyl)-AMP + GDP + phosphate + 2 H(+). Its pathway is purine metabolism; AMP biosynthesis via de novo pathway; AMP from IMP: step 1/2. Plays an important role in the de novo pathway of purine nucleotide biosynthesis. Catalyzes the first committed step in the biosynthesis of AMP from IMP. The chain is Adenylosuccinate synthetase from Mannheimia succiniciproducens (strain KCTC 0769BP / MBEL55E).